The sequence spans 591 residues: MATVPKSNMGPTKAVPTPFGCIGCKLPKPDYPPALIIFMFCAMVITVVVDLIGNSMVILAVTKNKKLRNSGNIFVASLSVADMLVAIYPYPLMLYAMSVGGWDLSQLQCQMVGLVTGLSVVGSIFNITAIAINRYCYICHSLQYKRIFSLRNTCIYLVVTWVMTVLAVLPNMYIGTIEYDPRTYTCIFNYVNNPAFTVTIVCIHFVLPLIIVGYCYTKIWIKVLAARDPAGQNPDNQFAEVRNFLTMFVIFLLFAVCWCPVNVLTVLVAVIPKEMAGKIPNWLYLAAYCIAYFNSCLNAIIYGILNESFRREYWTIFHAMRHPILFISHLISDIRETWETRALTRARVRARDQVREQERARACVAVEGTPRNVRNVLLPGDASAPHSDRASVRPKPQTRSTSVYRKPASIHHKSISGHPKSASVYPKPASSVHCKPASVHFKPASVHFKGDSVYFKGDTVHYRAASKLVTSHRISAGPSTSHPTSMAGYIKSGTSHPATTTVDYLEPATTSHSVLTAVDLPEVSASHCLEMTSTGHLRADISASVLPSVPFELAATPPDTTAIPIASGDYRKVVLIDDDSDDSDCSDEMAV.

At 1–38 (MATVPKSNMGPTKAVPTPFGCIGCKLPKPDYPPALIIF) the chain is on the extracellular side. A helical membrane pass occupies residues 39 to 59 (MFCAMVITVVVDLIGNSMVIL). The Cytoplasmic portion of the chain corresponds to 60–72 (AVTKNKKLRNSGN). The helical transmembrane segment at 73-93 (IFVASLSVADMLVAIYPYPLM) threads the bilayer. Topologically, residues 94–111 (LYAMSVGGWDLSQLQCQM) are extracellular. Cys-109 and Cys-186 form a disulfide bridge. The chain crosses the membrane as a helical span at residues 112-132 (VGLVTGLSVVGSIFNITAIAI). The Cytoplasmic portion of the chain corresponds to 133–151 (NRYCYICHSLQYKRIFSLR). The helical transmembrane segment at 152 to 172 (NTCIYLVVTWVMTVLAVLPNM) threads the bilayer. Over 173–196 (YIGTIEYDPRTYTCIFNYVNNPAF) the chain is Extracellular. The chain crosses the membrane as a helical span at residues 197 to 217 (TVTIVCIHFVLPLIIVGYCYT). At 218–247 (KIWIKVLAARDPAGQNPDNQFAEVRNFLTM) the chain is on the cytoplasmic side. Residues 248-268 (FVIFLLFAVCWCPVNVLTVLV) traverse the membrane as a helical segment. Topologically, residues 269-281 (AVIPKEMAGKIPN) are extracellular. A helical membrane pass occupies residues 282 to 302 (WLYLAAYCIAYFNSCLNAIIY). The Cytoplasmic portion of the chain corresponds to 303–591 (GILNESFRRE…DSDCSDEMAV (289 aa)). A disordered region spans residues 378-427 (LPGDASAPHSDRASVRPKPQTRSTSVYRKPASIHHKSISGHPKSASVYPK).

This sequence belongs to the G-protein coupled receptor 1 family. As to quaternary structure, homodimer, and heterodimer with MTNR1A and MTNR1B. Interacts with KAT5. Interacts with RTN4 isoform A/NOGO-A. Interacts with TGFBR1. In terms of tissue distribution, strongly expressed in the brain with highly restricted pattern of expression, confined to a subset of the ependymal cells of the third ventricle and a population of cells in the dorsomedial hypothalamic nucleus.

It is found in the cell membrane. The protein resides in the postsynaptic density. G protein-coupled receptor that plays a role in numerous physiological processes including regulation of energy metabolism, neurite outgrowth or cell migration. Promotes self-renewal and neuronal differentiation of neural progenitor cells through activation of the NOTCH and WNT/beta-catenin signaling pathways. Modulates the KAT5-dependent glucocorticoid receptor signaling by modulating KAT5 subcellular compartmentalisation. Also plays a role in the activation TGFBR1 in the absence of TGFBR2 by interfering with FKBP1A binding to TGFBR1, leading to induction of both canonical and non-canonical SMAD signaling pathways resulting in inhibition of proliferation or promotion of migration. The sequence is that of Melatonin-related receptor (Gpr50) from Mus musculus (Mouse).